The primary structure comprises 260 residues: Thiazole synthase (260 aa).

K102 functions as the Schiff-base intermediate with DXP in the catalytic mechanism. Residues G163, 189-190 (AG), and 211-212 (NT) each bind 1-deoxy-D-xylulose 5-phosphate.

Belongs to the ThiG family. In terms of assembly, homotetramer. Forms heterodimers with either ThiH or ThiS.

Its subcellular location is the cytoplasm. The catalysed reaction is [ThiS sulfur-carrier protein]-C-terminal-Gly-aminoethanethioate + 2-iminoacetate + 1-deoxy-D-xylulose 5-phosphate = [ThiS sulfur-carrier protein]-C-terminal Gly-Gly + 2-[(2R,5Z)-2-carboxy-4-methylthiazol-5(2H)-ylidene]ethyl phosphate + 2 H2O + H(+). It functions in the pathway cofactor biosynthesis; thiamine diphosphate biosynthesis. Functionally, catalyzes the rearrangement of 1-deoxy-D-xylulose 5-phosphate (DXP) to produce the thiazole phosphate moiety of thiamine. Sulfur is provided by the thiocarboxylate moiety of the carrier protein ThiS. In vitro, sulfur can be provided by H(2)S. In Citrifermentans bemidjiense (strain ATCC BAA-1014 / DSM 16622 / JCM 12645 / Bem) (Geobacter bemidjiensis), this protein is Thiazole synthase.